A 334-amino-acid polypeptide reads, in one-letter code: Ketol-acid reductoisomerase (NADP(+)) (334 aa).

The region spanning 1–181 (MTTVYYDQSV…GATRAGVLET (181 aa)) is the KARI N-terminal Rossmann domain. NADP(+)-binding positions include 25–28 (YGSQ), R48, S52, and 82–85 (DEIQ). The active site involves H107. G133 is an NADP(+) binding site. The region spanning 182 to 327 (SFKEETETDL…RELRDMMPFI (146 aa)) is the KARI C-terminal knotted domain. Mg(2+)-binding residues include D190, E194, E226, and E230. S251 lines the substrate pocket.

It belongs to the ketol-acid reductoisomerase family. The cofactor is Mg(2+).

The enzyme catalyses (2R)-2,3-dihydroxy-3-methylbutanoate + NADP(+) = (2S)-2-acetolactate + NADPH + H(+). The catalysed reaction is (2R,3R)-2,3-dihydroxy-3-methylpentanoate + NADP(+) = (S)-2-ethyl-2-hydroxy-3-oxobutanoate + NADPH + H(+). It participates in amino-acid biosynthesis; L-isoleucine biosynthesis; L-isoleucine from 2-oxobutanoate: step 2/4. The protein operates within amino-acid biosynthesis; L-valine biosynthesis; L-valine from pyruvate: step 2/4. In terms of biological role, involved in the biosynthesis of branched-chain amino acids (BCAA). Catalyzes an alkyl-migration followed by a ketol-acid reduction of (S)-2-acetolactate (S2AL) to yield (R)-2,3-dihydroxy-isovalerate. In the isomerase reaction, S2AL is rearranged via a Mg-dependent methyl migration to produce 3-hydroxy-3-methyl-2-ketobutyrate (HMKB). In the reductase reaction, this 2-ketoacid undergoes a metal-dependent reduction by NADPH to yield (R)-2,3-dihydroxy-isovalerate. The sequence is that of Ketol-acid reductoisomerase (NADP(+)) from Staphylococcus saprophyticus subsp. saprophyticus (strain ATCC 15305 / DSM 20229 / NCIMB 8711 / NCTC 7292 / S-41).